A 208-amino-acid polypeptide reads, in one-letter code: FMN-dependent NADH:quinone oxidoreductase (208 aa).

Residues 17-19, 99-102, and 143-146 each bind FMN; these read SNS, MWNL, and SRGG.

This sequence belongs to the azoreductase type 1 family. As to quaternary structure, homodimer. It depends on FMN as a cofactor.

The catalysed reaction is 2 a quinone + NADH + H(+) = 2 a 1,4-benzosemiquinone + NAD(+). It carries out the reaction N,N-dimethyl-1,4-phenylenediamine + anthranilate + 2 NAD(+) = 2-(4-dimethylaminophenyl)diazenylbenzoate + 2 NADH + 2 H(+). Its function is as follows. Quinone reductase that provides resistance to thiol-specific stress caused by electrophilic quinones. In terms of biological role, also exhibits azoreductase activity. Catalyzes the reductive cleavage of the azo bond in aromatic azo compounds to the corresponding amines. In Staphylococcus aureus (strain MRSA252), this protein is FMN-dependent NADH:quinone oxidoreductase.